The chain runs to 327 residues: Peroxidase 21 (327 aa).

A signal peptide spans 1–28 (MANAKPFCLLGFFCLLLQLFSIFHIGNG). 4 disulfides stabilise this stretch: C39-C118, C72-C77, C124-C323, and C204-C231. H70 (proton acceptor) is an active-site residue. 4 residues coordinate Ca(2+): D71, V74, D78, and S80. P167 serves as a coordination point for substrate. A glycan (N-linked (GlcNAc...) asparagine) is linked at N170. Residue H197 participates in heme b binding. Ca(2+) is bound at residue S198. Ca(2+) is bound by residues D247, T250, and D255.

Belongs to the peroxidase family. Classical plant (class III) peroxidase subfamily. Requires heme b as cofactor. Ca(2+) serves as cofactor. In terms of tissue distribution, preferentially expressed in roots and leaves, slightly in stems.

It carries out the reaction 2 a phenolic donor + H2O2 = 2 a phenolic radical donor + 2 H2O. In terms of biological role, removal of H(2)O(2), oxidation of toxic reductants, biosynthesis and degradation of lignin, suberization, auxin catabolism, response to environmental stresses such as wounding, pathogen attack and oxidative stress. These functions might be dependent on each isozyme/isoform in each plant tissue. Functionally, might function as heat shock-like defense protein. May be implicated in the systemic acquired resistance response. This is Peroxidase 21 (PER21) from Arabidopsis thaliana (Mouse-ear cress).